Here is a 223-residue protein sequence, read N- to C-terminus: Endonuclease NucS (223 aa).

Belongs to the NucS endonuclease family.

The protein localises to the cytoplasm. Its function is as follows. Cleaves both 3' and 5' ssDNA extremities of branched DNA structures. This chain is Endonuclease NucS, found in Streptomyces coelicolor (strain ATCC BAA-471 / A3(2) / M145).